Reading from the N-terminus, the 838-residue chain is Ras-interacting protein RIP3 (838 aa).

Disordered regions lie at residues 66-97, 157-290, and 305-336; these read VSTS…QQQA, KPTT…TSPK, and NSKT…QQQA. Low complexity-rich tracts occupy residues 67-97, 157-241, and 248-284; these read STSN…QQQA, KPTT…QQKP, and PQNI…QQQQ. The segment covering 310–321 has biased composition (basic and acidic residues); it reads QKSDKTSEKENK. Residues 441 to 515 enclose the CRIM domain; the sequence is QLKVRVIEKA…KDEVLVLCPN (75 aa). Disordered regions lie at residues 522–581 and 594–646; these read KSSS…QQTQ and QQQQ…GPDA. 3 stretches are compositionally biased toward low complexity: residues 537–556, 563–581, and 594–620; these read NNNN…SNNN, QPQQ…QQTQ, and QQQQ…QPDQ. A compositionally biased stretch (gly residues) spans 621–631; it reads VGGGGGGGGGN. The region spanning 648–717 is the RBD domain; sequence LVVKITLPDS…GGADLILVSR (70 aa).

The protein belongs to the SIN1 family. In terms of assembly, interacts with activated RasG. Part of a complex, TORC2, consisting of tor, lst8, piaA and ripA. Additional proteins, such as 14-3-3 and heat-shock proteins, may also belong to the TORC2 complex.

Its function is as follows. Component of a Ras-regulated pathway involved in integrating chemotaxis and signal relay pathways that are essential for aggregation. This chain is Ras-interacting protein RIP3 (ripA), found in Dictyostelium discoideum (Social amoeba).